We begin with the raw amino-acid sequence, 392 residues long: ATP phosphoribosyltransferase regulatory subunit (392 aa).

The protein belongs to the class-II aminoacyl-tRNA synthetase family. HisZ subfamily. Heteromultimer composed of HisG and HisZ subunits.

Its subcellular location is the cytoplasm. Its pathway is amino-acid biosynthesis; L-histidine biosynthesis; L-histidine from 5-phospho-alpha-D-ribose 1-diphosphate: step 1/9. Functionally, required for the first step of histidine biosynthesis. May allow the feedback regulation of ATP phosphoribosyltransferase activity by histidine. This Prochlorococcus marinus (strain MIT 9303) protein is ATP phosphoribosyltransferase regulatory subunit.